The chain runs to 239 residues: Phosphoribosylaminoimidazole-succinocarboxamide synthase (239 aa).

Belongs to the SAICAR synthetase family.

It catalyses the reaction 5-amino-1-(5-phospho-D-ribosyl)imidazole-4-carboxylate + L-aspartate + ATP = (2S)-2-[5-amino-1-(5-phospho-beta-D-ribosyl)imidazole-4-carboxamido]succinate + ADP + phosphate + 2 H(+). It functions in the pathway purine metabolism; IMP biosynthesis via de novo pathway; 5-amino-1-(5-phospho-D-ribosyl)imidazole-4-carboxamide from 5-amino-1-(5-phospho-D-ribosyl)imidazole-4-carboxylate: step 1/2. This chain is Phosphoribosylaminoimidazole-succinocarboxamide synthase, found in Bacillus cereus (strain G9842).